A 248-amino-acid polypeptide reads, in one-letter code: MEGAEEKKKKVPAVPETLKKKRKNFAELKIKRLRKKFAQKMLRKARRKLIYEKAKHYHKEYRQMYRTEIRMARMARKAGNFYVPAEPKLAFVIRIRGINGVSPKVRKVLQLLRLRQIFNGTFVKLNKASINMLRIVEPYIAWGYPNLKSVNELIYKRGYGKINKKRIALTDNALIARSLGKYGIICMEDLIHEIYTVGKRFKEANNFLWPFKLSSPRGGMKKKTTHFVEGGDAGNREDQINRLIRRMN.

Met-1 carries the N-acetylmethionine modification. Repeat copies occupy residues 7 to 18, 19 to 30, 31 to 42, and 43 to 54. The tract at residues 7-54 is 4 X 12 AA tandem repeats; that stretch reads KKKKVPAVPETLKKKRKNFAELKIKRLRKKFAQKMLRKARRKLIYEKA. Thr-17 is subject to Phosphothreonine. An N6-acetyllysine modification is found at Lys-124. Lys-127 bears the N6-succinyllysine mark. Position 139 is a phosphotyrosine (Tyr-139).

It belongs to the universal ribosomal protein uL30 family. As to quaternary structure, component of the large ribosomal subunit. Homodimer. Interacts with DHX33.

It is found in the cytoplasm. Component of the large ribosomal subunit. The ribosome is a large ribonucleoprotein complex responsible for the synthesis of proteins in the cell. Binds to G-rich structures in 28S rRNA and in mRNAs. Plays a regulatory role in the translation apparatus; inhibits cell-free translation of mRNAs. This Bos taurus (Bovine) protein is Large ribosomal subunit protein uL30 (RPL7).